An 86-amino-acid polypeptide reads, in one-letter code: YcgL domain-containing protein XC_4086 (86 aa).

The 83-residue stretch at 1-83 (MHAYVYKSQR…PKTVVLAGEC (83 aa)) folds into the YcgL domain.

This Xanthomonas campestris pv. campestris (strain 8004) protein is YcgL domain-containing protein XC_4086.